Consider the following 357-residue polypeptide: DNA replication and repair protein RecF (357 aa).

Glycine 30–threonine 37 lines the ATP pocket.

This sequence belongs to the RecF family.

It is found in the cytoplasm. Its function is as follows. The RecF protein is involved in DNA metabolism; it is required for DNA replication and normal SOS inducibility. RecF binds preferentially to single-stranded, linear DNA. It also seems to bind ATP. In Salmonella heidelberg (strain SL476), this protein is DNA replication and repair protein RecF.